The primary structure comprises 426 residues: Histidine--tRNA ligase (426 aa).

This sequence belongs to the class-II aminoacyl-tRNA synthetase family. Homodimer.

It is found in the cytoplasm. It catalyses the reaction tRNA(His) + L-histidine + ATP = L-histidyl-tRNA(His) + AMP + diphosphate + H(+). The chain is Histidine--tRNA ligase from Streptococcus pyogenes serotype M28 (strain MGAS6180).